The chain runs to 1376 residues: Major capsid protein (1376 aa).

It belongs to the herpesviridae major capsid protein family. In terms of assembly, homomultimer. Makes the hexons and eleven out of twelve pentons. Interacts with triplex proteins 1/TRX1 and 2/TRX2; adjacent capsomers are linked together in groups of three by triplexes, heterotrimeric complexes composed of one molecule of TRX1 and two molecules of TRX2. Interacts with scaffold protein; this interaction allows efficient MCP transport to the host nucleus. Interacts with capsid vertex component 2/CVC2. Interacts with the small capsomere-interacting protein/SCP.

The protein localises to the virion. The protein resides in the host nucleus. Self-assembles to form an icosahedral capsid with a T=16 symmetry, about 200 nm in diameter, and consisting of 150 hexons and 12 pentons (total of 162 capsomers). Hexons form the edges and faces of the capsid and are each composed of six MCP molecules. In contrast, one penton is found at each of the 12 vertices. Eleven of the pentons are MCP pentamers, while the last vertex is occupied by the portal complex. The capsid is surrounded by a layer of proteinaceous material designated the tegument which, in turn, is enclosed in an envelope of host cell-derived lipids containing virus-encoded glycoproteins. This Equus caballus (Horse) protein is Major capsid protein.